An 82-amino-acid chain; its full sequence is Cortexin-1 (82 aa).

A disordered region spans residues 1-20 (MSSAWTLSPEPLPPSTGPPV). A helical membrane pass occupies residues 30-50 (TVFAFVLCLLVVLVLLMVRCV).

This sequence belongs to the cortexin family.

It is found in the membrane. May mediate extracellular or intracellular signaling of cortical neurons during forebrain development. The chain is Cortexin-1 (Ctxn1) from Mus musculus (Mouse).